Consider the following 760-residue polypeptide: ATP-dependent zinc metalloprotease FtsH (760 aa).

The Cytoplasmic portion of the chain corresponds to 1 to 5 (MNRKN). Residues 6–26 (VTRTITAIAVVVLLGWSFFYF) form a helical membrane-spanning segment. The Extracellular portion of the chain corresponds to 27–110 (SDDTRGYKPV…KVSTVVNQGS (84 aa)). The chain crosses the membrane as a helical span at residues 111–131 (ILGELLVYVLPLLLLVGLFVM). The Cytoplasmic portion of the chain corresponds to 132-760 (FSRMQGGARM…EVSRTKPAHG (629 aa)). 203–210 (GPPGTGKT) provides a ligand contact to ATP. H425 serves as a coordination point for Zn(2+). E426 is a catalytic residue. Zn(2+) is bound by residues H429 and D501. Residues 616–760 (DFGGRIPSDK…EVSRTKPAHG (145 aa)) form a disordered region. The segment covering 650–669 (AFKAAIAQATQAAEAARSDA) has biased composition (low complexity). Residues 740–750 (GSDESSAEQDD) are compositionally biased toward acidic residues.

The protein in the central section; belongs to the AAA ATPase family. It in the C-terminal section; belongs to the peptidase M41 family. Homohexamer. Zn(2+) is required as a cofactor.

The protein resides in the cell membrane. Functionally, acts as a processive, ATP-dependent zinc metallopeptidase for both cytoplasmic and membrane proteins. Plays a role in the quality control of integral membrane proteins. In Mycobacterium tuberculosis (strain CDC 1551 / Oshkosh), this protein is ATP-dependent zinc metalloprotease FtsH.